Here is a 393-residue protein sequence, read N- to C-terminus: Probable alpha-1,6-mannosyltransferase MNN10 (393 aa).

Residues 1–52 (MSSVPYNSQLPISNHLEYDEDEKKSRGSKLGLKYKMIYWRKTLCSSLARWRK) are Cytoplasmic-facing. Residues 53-73 (LILLISLALFLFIWISDSTIS) traverse the membrane as a helical; Signal-anchor for type II membrane protein segment. Over 74–393 (RNPSTTSFQG…RKWYTRFFFP (320 aa)) the chain is Lumenal. Residues 77–97 (STTSFQGQNSNDNKLSNTGSS) are disordered.

It belongs to the glycosyltransferase 34 family. Component of the M-Pol II complex composed of ANP1, MNN9, MNN10, MNN11 and HOC1.

The protein resides in the endoplasmic reticulum membrane. Its subcellular location is the golgi apparatus. It is found in the cis-Golgi network membrane. Its function is as follows. Required for polarized growth and efficient budding. In terms of biological role, the M-Pol II complex possesses alpha-1,6-mannosyltransferase activity and is probably involved in the elongation of the mannan backbone of N-linked glycans on cell wall and periplasmic proteins. This is Probable alpha-1,6-mannosyltransferase MNN10 (MNN10) from Saccharomyces cerevisiae (strain ATCC 204508 / S288c) (Baker's yeast).